The chain runs to 183 residues: Inosine/xanthosine triphosphatase (183 aa).

Position 75 (D75) interacts with Mg(2+). 75 to 76 (DG) lines the substrate pocket.

It belongs to the YjjX NTPase family. In terms of assembly, homodimer. Mg(2+) is required as a cofactor. It depends on Mn(2+) as a cofactor.

The catalysed reaction is XTP + H2O = XDP + phosphate + H(+). The enzyme catalyses ITP + H2O = IDP + phosphate + H(+). Phosphatase that hydrolyzes non-canonical purine nucleotides such as XTP and ITP to their respective diphosphate derivatives. Probably excludes non-canonical purines from DNA/RNA precursor pool, thus preventing their incorporation into DNA/RNA and avoiding chromosomal lesions. This chain is Inosine/xanthosine triphosphatase, found in Vibrio vulnificus (strain CMCP6).